The chain runs to 330 residues: Alpha-1,6-glucosyltransferase (330 aa).

It belongs to the glycosyltransferase group 1 family. Does not require a metal cofactor. is required as a cofactor.

The protein localises to the cytoplasm. The protein operates within protein modification; protein glycosylation. Catalyzes the transfer of a glucose moiety from UDP-glucose to another glucose that is N-linked to an asparagine within a peptide or protein. Can act in a repetitive manner, and this way it elongates the N-linked glucose by a glycan chain consisting of several alpha-1-&gt;6 linked glucose residues. Is able to add up to six glucose units in vitro. Cannot use UDP-Gal, UDP-GlcNAc or UDP-GalNAc as a substrate donor. This Actinobacillus pleuropneumoniae serotype 7 (strain AP76) protein is Alpha-1,6-glucosyltransferase.